Reading from the N-terminus, the 177-residue chain is Endothelin-2 (177 aa).

The N-terminal stretch at 1–23 is a signal peptide; sequence MPTALCSIALALLVALHEGKSQA. A propeptide spanning residues 24–45 is cleaved from the precursor; it reads ATTPIPEQPAPLPRARGSHLRT. Cystine bridges form between cysteine 48/cysteine 62 and cysteine 50/cysteine 58. The propeptide occupies 69–177; it reads VNTPGQTAPY…RPTHSRQRKR (109 aa). Positions 95 to 110 are endothelin-like; it reads CECYSARDPACATFCH. The disordered stretch occupies residues 155-177; the sequence is HFARQQQKPTRETRPTHSRQRKR.

The protein belongs to the endothelin/sarafotoxin family. Expressed in various organs including heart, lung, liver, kidney, gastrointestinal tract, uterus and ovary, but not in spleen. Within the gastrointestinal tract, gene expression was detected in rumen, a ruminant-specific digestive organ, as well as stomach, duodenum and colon.

Its subcellular location is the secreted. Endothelins are endothelium-derived vasoconstrictor peptides. In Bos taurus (Bovine), this protein is Endothelin-2 (EDN2).